The following is a 334-amino-acid chain: D-fructose 1,6-bisphosphatase class 2/sedoheptulose 1,7-bisphosphatase (334 aa).

Mn(2+) is bound by residues Asp-33, Glu-57, Asp-85, and Glu-88. Substrate contacts are provided by residues 88-90 (EGT), Tyr-119, 164-166 (RAR), and 186-188 (DGD). Residue Glu-213 participates in Mn(2+) binding.

The protein belongs to the FBPase class 2 family. Homotetramer. Mn(2+) serves as cofactor.

It carries out the reaction beta-D-fructose 1,6-bisphosphate + H2O = beta-D-fructose 6-phosphate + phosphate. It catalyses the reaction D-sedoheptulose 1,7-bisphosphate + H2O = D-sedoheptulose 7-phosphate + phosphate. Its pathway is carbohydrate biosynthesis; Calvin cycle. In terms of biological role, catalyzes the hydrolysis of fructose 1,6-bisphosphate (Fru 1,6-P2) and sedoheptulose 1,7-bisphosphate (Sed 1,7-P2) to fructose 6-phosphate and sedoheptulose 7-phosphate, respectively. The protein is D-fructose 1,6-bisphosphatase class 2/sedoheptulose 1,7-bisphosphatase of Prochlorococcus marinus (strain MIT 9313).